The chain runs to 522 residues: Target of rapamycin complex 2 subunit MAPKAP1 (522 aa).

An N-acetylalanine modification is found at Ala2. The segment at 2 to 184 is interaction with MAP3K2; sequence AFLDNPTIIL…KKIDVYLPLH (183 aa). The interaction with NBN stretch occupies residues 2-267; it reads AFLDNPTIIL…GFSTLALVEK (266 aa). Positions 38 to 59 are disordered; the sequence is LEKTHPPSVPGDSGSEVQGSSG. The residue at position 86 (Thr86) is a Phosphothreonine; by PKB/AKT1 and RPS6KB1. The residue at position 128 (Ser128) is a Phosphoserine; by PKC. Residues 139–267 form the CRIM domain; it reads QSILSVRLEQ…GFSTLALVEK (129 aa). Phosphoserine is present on residues Ser186, Ser315, and Ser356. The SIN1-type RBD stretch occupies residues 279–353; that stretch reads LFVRINAAHG…QNAWEFCLVR (75 aa). The 106-residue stretch at 382–487 folds into the SIN1-type PH domain; that stretch reads HYKSFKVSMI…IVLKVNYILE (106 aa). A 1,2-diacyl-sn-glycero-3-phospho-(1D-myo-inositol-3,4,5-trisphosphate) is bound at residue Arg393. Thr398 is subject to Phosphothreonine; by RPS6KB1. Residues Lys428 and Lys464 each coordinate a 1,2-diacyl-sn-glycero-3-phospho-(1D-myo-inositol-3,4,5-trisphosphate). Residues 468–522 are interaction with ATF2; it reads FESDAATVSEIVLKVNYILESRASTARADYLAQKQRKLNRRTSFSFQKEKKSGQQ. A Phosphoserine modification is found at Ser510.

It belongs to the SIN1 family. As to quaternary structure, component of the mechanistic target of rapamycin complex 2 (mTORC2), consisting in two heterotretramers composed of MTOR, MLST8, RICTOR and MAPKAP1/SIN1. The mTORC2 core complex associates with PRR5/PROTOR1 and/or PRR5L/PROTOR2. Contrary to mTORC1, mTORC2 does not bind to and is not sensitive to FKBP12-rapamycin. Interacts with MAP3K2. Interacts with ATF2. Interacts with MAPK8. Interacts with GTP-bound HRAS and KRAS; inhibiting their activity. Interacts with IFNAR2. In terms of processing, phosphorylation at Ser-128 by PKC promotes relocalization to the perinuclear region, where the mTORC2 complex specifically mediates phosphorylation of SGK1. Phosphorylated at Thr-86 by AKT1 or RPS6KB1 in the presence of growth factors; the effect of this phosphorylation is however unclear. According to two studies, phosphorylation at Thr-86 by AKT1 is part of a positive feedback loop that increases mTORC2 activation. According to another study, phosphorylation at Thr-86 and Thr-398 by RPS6KB1 promotes dissociation from the mTORC2 complex, leading to inhibit mTORC2 signaling. Uniquitously expressed, with highest levels in testis, kidney and liver. Present in renal tubule cells (at protein level).

The protein localises to the cell membrane. It localises to the endoplasmic reticulum membrane. Its subcellular location is the early endosome membrane. It is found in the late endosome membrane. The protein resides in the lysosome membrane. The protein localises to the golgi apparatus membrane. It localises to the mitochondrion outer membrane. Its subcellular location is the cytoplasm. It is found in the perinuclear region. The protein resides in the nucleus. With respect to regulation, phosphatidylinositol 3,4,5-trisphosphate (PI(3,4,5)P3) promotes MTOR activation by relieving MAPKAP1/SIN1-mediated inhibition of MTOR that takes place in absence of PI(3,4,5)P3. Component of the mechanistic target of rapamycin complex 2 (mTORC2), which transduces signals from growth factors to pathways involved in proliferation, cytoskeletal organization, lipogenesis and anabolic output. In response to growth factors, mTORC2 phosphorylates and activates AGC protein kinase family members, including AKT (AKT1, AKT2 and AKT3), PKC (PRKCA, PRKCB and PRKCE) and SGK1. In contrast to mTORC1, mTORC2 is nutrient-insensitive. Within the mTORC2 complex, MAPKAP1/SIN1 acts as a substrate adapter which recognizes and binds AGC protein kinase family members for phosphorylation by MTOR. mTORC2 plays a critical role in AKT1 activation by mediating phosphorylation of different sites depending on the context, such as 'Thr-450', 'Ser-473', 'Ser-477' or 'Thr-479', facilitating the phosphorylation of the activation loop of AKT1 on 'Thr-308' by PDPK1/PDK1 which is a prerequisite for full activation. mTORC2 catalyzes the phosphorylation of SGK1 at 'Ser-422' and of PRKCA on 'Ser-657'. The mTORC2 complex also phosphorylates various proteins involved in insulin signaling, such as FBXW8 and IGF2BP1. mTORC2 acts upstream of Rho GTPases to regulate the actin cytoskeleton, probably by activating one or more Rho-type guanine nucleotide exchange factors. mTORC2 promotes the serum-induced formation of stress-fibers or F-actin. MAPKAP1 inhibits MAP3K2 by preventing its dimerization and autophosphorylation. Inhibits HRAS and KRAS independently of mTORC2 complex. Enhances osmotic stress-induced phosphorylation of ATF2 and ATF2-mediated transcription. Involved in ciliogenesis, regulates cilia length through its interaction with CCDC28B independently of mTORC2 complex. The protein is Target of rapamycin complex 2 subunit MAPKAP1 of Mus musculus (Mouse).